Here is a 447-residue protein sequence, read N- to C-terminus: N-succinylarginine dihydrolase (447 aa).

Residues 19–28 (AGLSVGNKAS), Asn-110, and 137–138 (HR) each bind substrate. Glu-174 is an active-site residue. Residue Arg-213 coordinates substrate. Residue His-249 is part of the active site. Residues Asp-251 and Asn-365 each contribute to the substrate site. Cys-371 serves as the catalytic Nucleophile.

The protein belongs to the succinylarginine dihydrolase family. Homodimer.

The catalysed reaction is N(2)-succinyl-L-arginine + 2 H2O + 2 H(+) = N(2)-succinyl-L-ornithine + 2 NH4(+) + CO2. The protein operates within amino-acid degradation; L-arginine degradation via AST pathway; L-glutamate and succinate from L-arginine: step 2/5. Functionally, catalyzes the hydrolysis of N(2)-succinylarginine into N(2)-succinylornithine, ammonia and CO(2). This Photorhabdus laumondii subsp. laumondii (strain DSM 15139 / CIP 105565 / TT01) (Photorhabdus luminescens subsp. laumondii) protein is N-succinylarginine dihydrolase.